The primary structure comprises 487 residues: DEAD-box ATP-dependent RNA helicase CshA (487 aa).

The Q motif motif lies at 3–31; sequence ITFQDFQLSSDLTKAIKRMGFEEATPIQA. The Helicase ATP-binding domain maps to 34–204; the sequence is IPLGLANKDV…ERFMTNPEHV (171 aa). 47-54 serves as a coordination point for ATP; it reads AQTGTGKT. Positions 152–155 match the DEAD box motif; it reads DEAD. Positions 215 to 375 constitute a Helicase C-terminal domain; that stretch reads NIQQFYLEVH…RMKAPTLDEA (161 aa). The span at 428–440 shows a compositional bias: basic and acidic residues; that stretch reads DNTPVRLTEEAPL. A disordered region spans residues 428-487; that stretch reads DNTPVRLTEEAPLRTKRNKNHHHRSSKRRDGGGYRGKNNRSSYDKKRSSNDRRQKKSYNS. Residues 441 to 454 are compositionally biased toward basic residues; the sequence is RTKRNKNHHHRSSK. Over residues 469-479 the composition is skewed to basic and acidic residues; it reads SYDKKRSSNDR.

The protein belongs to the DEAD box helicase family. CshA subfamily. As to quaternary structure, oligomerizes, may be a member of the RNA degradosome.

It is found in the cytoplasm. It carries out the reaction ATP + H2O = ADP + phosphate + H(+). Its function is as follows. DEAD-box RNA helicase possibly involved in RNA degradation. Unwinds dsRNA in both 5'- and 3'-directions, has RNA-dependent ATPase activity. In Bacillus licheniformis (strain ATCC 14580 / DSM 13 / JCM 2505 / CCUG 7422 / NBRC 12200 / NCIMB 9375 / NCTC 10341 / NRRL NRS-1264 / Gibson 46), this protein is DEAD-box ATP-dependent RNA helicase CshA.